We begin with the raw amino-acid sequence, 819 residues long: Myosin light chain kinase 3 (819 aa).

A disordered region spans residues 146-460 (VPWRRGSPGD…PGVGNPEPEQ (315 aa)). Ser-152 is modified (phosphoserine). 2 stretches are compositionally biased toward basic and acidic residues: residues 158 to 170 (EENK…EGAK) and 183 to 196 (DARE…KADV). Positions 307–318 (GPGPQCPGPPGL) are enriched in pro residues. A phosphoserine mark is found at Ser-355, Ser-401, and Ser-408. A Protein kinase domain is found at 515-770 (VCQHEVLGGG…ATQCLKHEWL (256 aa)). ATP-binding positions include 521 to 529 (LGGGRFGQV) and Lys-544. The active-site Proton acceptor is Asp-636.

It belongs to the protein kinase superfamily. CAMK Ser/Thr protein kinase family. The cofactor is Mg(2+). In terms of processing, phosphorylated on serine residues.

It is found in the cytoplasm. The enzyme catalyses L-seryl-[myosin light chain] + ATP = O-phospho-L-seryl-[myosin light chain] + ADP + H(+). The catalysed reaction is L-threonyl-[myosin light chain] + ATP = O-phospho-L-threonyl-[myosin light chain] + ADP + H(+). Kinase that phosphorylates MYL2 in vitro. Promotes sarcomere formation in cardiomyocytes and increases cardiomyocyte contractility. The sequence is that of Myosin light chain kinase 3 (MYLK3) from Pongo abelii (Sumatran orangutan).